The following is a 372-amino-acid chain: Chaperone protein DnaJ (372 aa).

The J domain maps to 5-69 (DYYEVLGLSK…QKKAQYDQFG (65 aa)). The segment at 129–211 (GAEKEISVKK…CGGTGRKVKT (83 aa)) adopts a CR-type zinc-finger fold. Zn(2+)-binding residues include Cys-142, Cys-145, Cys-159, Cys-162, Cys-185, Cys-188, Cys-199, and Cys-202. CXXCXGXG motif repeat units follow at residues 142–149 (CDTCDGSG), 159–166 (CSTCGGRG), 185–192 (CPDCGGTG), and 199–206 (CSDCGGTG).

It belongs to the DnaJ family. As to quaternary structure, homodimer. Zn(2+) is required as a cofactor.

The protein localises to the cytoplasm. Its function is as follows. Participates actively in the response to hyperosmotic and heat shock by preventing the aggregation of stress-denatured proteins and by disaggregating proteins, also in an autonomous, DnaK-independent fashion. Unfolded proteins bind initially to DnaJ; upon interaction with the DnaJ-bound protein, DnaK hydrolyzes its bound ATP, resulting in the formation of a stable complex. GrpE releases ADP from DnaK; ATP binding to DnaK triggers the release of the substrate protein, thus completing the reaction cycle. Several rounds of ATP-dependent interactions between DnaJ, DnaK and GrpE are required for fully efficient folding. Also involved, together with DnaK and GrpE, in the DNA replication of plasmids through activation of initiation proteins. This Macrococcus caseolyticus (strain JCSC5402) (Macrococcoides caseolyticum) protein is Chaperone protein DnaJ.